A 360-amino-acid chain; its full sequence is Phosphoserine aminotransferase (360 aa).

Position 42 (arginine 42) interacts with L-glutamate. Residues 76 to 77 (AR), tryptophan 102, threonine 153, aspartate 172, and glutamine 195 each bind pyridoxal 5'-phosphate. Residue lysine 196 is modified to N6-(pyridoxal phosphate)lysine. A pyridoxal 5'-phosphate-binding site is contributed by 237 to 238 (NT).

It belongs to the class-V pyridoxal-phosphate-dependent aminotransferase family. SerC subfamily. As to quaternary structure, homodimer. The cofactor is pyridoxal 5'-phosphate.

The protein resides in the cytoplasm. It catalyses the reaction O-phospho-L-serine + 2-oxoglutarate = 3-phosphooxypyruvate + L-glutamate. It carries out the reaction 4-(phosphooxy)-L-threonine + 2-oxoglutarate = (R)-3-hydroxy-2-oxo-4-phosphooxybutanoate + L-glutamate. It participates in amino-acid biosynthesis; L-serine biosynthesis; L-serine from 3-phospho-D-glycerate: step 2/3. The protein operates within cofactor biosynthesis; pyridoxine 5'-phosphate biosynthesis; pyridoxine 5'-phosphate from D-erythrose 4-phosphate: step 3/5. Functionally, catalyzes the reversible conversion of 3-phosphohydroxypyruvate to phosphoserine and of 3-hydroxy-2-oxo-4-phosphonooxybutanoate to phosphohydroxythreonine. The polypeptide is Phosphoserine aminotransferase (Aliivibrio fischeri (strain ATCC 700601 / ES114) (Vibrio fischeri)).